A 544-amino-acid chain; its full sequence is Cytochrome P450 monooxygenase cle2 (544 aa).

Residues Leu-19 to Leu-39 form a helical membrane-spanning segment. Residues Arg-273–Gly-305 form a disordered region. The span at Ser-280 to Lys-290 shows a compositional bias: basic and acidic residues. The span at Glu-291–Pro-304 shows a compositional bias: acidic residues. Heme is bound at residue Cys-478.

Belongs to the cytochrome P450 family. Requires heme as cofactor.

It is found in the membrane. Its pathway is secondary metabolite biosynthesis; terpenoid biosynthesis. In terms of biological role, cytochrome P450 monooxygenase; part of the cluster A that mediates the biosynthesis of chevalone E and its oxidized derivatives that possess a unique five-membered lactone ring and can synergistically enhance the cytotoxicity of doxorubicin (DOX) in breast cancer cells. Within the pathway, cle2 is involved in hydroxylation of the chavalone E scaffold at position C-20 and contributes with cle4 to the production of seven oxidation derivatives. The molecular scaffold is commonly biosynthesized by a series of enzymes including the non-reducing polyketide synthase (NR-PKS) cle1 that produces the alpha-pyrone triacetic acid lactone (TAL); The membrane-bound prenyltransferase cle5 that accepts TAL as its substrate to perform a C-3 geranylgeranylation reaction, in which the pathway-dedicated GGPS cle6 is required to provide GGPP, the other substrate of cle5; the FAD-dependent monooxygenase Cle3 that forms an (S)-epoxide ring at the terminal olefin of the geranylgeranyl group; and the terpene cyclase Cle7 that catalyzes the cyclization of the prenyl group that yields the pentacyclic pathway intermediate chevalone E. Chevalone E can derivatize into seven new oxidized analogs by the cytochrome P450 monooxygenases cle2 (acting at C-20) and cle4 (acting at C-11 and C-12). In Aspergillus versicolor, this protein is Cytochrome P450 monooxygenase cle2.